Reading from the N-terminus, the 1234-residue chain is PAN2-PAN3 deadenylation complex catalytic subunit PAN2 (1234 aa).

Positions 12–32 (LKNSNNNSNSNSSSNNSSNGV) are disordered. The span at 14 to 30 (NSNNNSNSNSSSNNSSN) shows a compositional bias: low complexity. WD repeat units lie at residues 176–213 (NHTGKVAMVKEAPKLLALASSTGSLELFDPTSNSSIKT), 272–315 (AFPA…VYHA), and 342–381 (QQQPHLSGLEISENGDFFMFNDGFSNLHLWSITNSGTLSK). A disordered region spans residues 323–346 (PLPPAGSSAAQQQKQQQQQQQQPH). Over residues 333 to 344 (QQQKQQQQQQQQ) the composition is skewed to low complexity. A linker region spans residues 383 to 537 (FVNFPQEIER…DSIFQCQNDE (155 aa)). The region spanning 538-946 (KIPNCYSRLQ…KPVIVIYQEV (409 aa)) is the USP domain. The interval 751–775 (PNTQQDQQQQQQQQQQQQQQQQPTN) is disordered. Over residues 754–772 (QQDQQQQQQQQQQQQQQQQ) the composition is skewed to low complexity. Residues aspartate 1004, glutamate 1006, aspartate 1138, and aspartate 1191 each coordinate a divalent metal cation. Positions 1072–1199 (GEAFIDDYIV…EDARTALLLY (128 aa)) constitute an Exonuclease domain.

Belongs to the peptidase C19 family. PAN2 subfamily. As to quaternary structure, forms a heterotrimer with an asymmetric homodimer of the regulatory subunit PAN3 to form the poly(A)-nuclease (PAN) deadenylation complex. The cofactor is a divalent metal cation.

The protein resides in the cytoplasm. The enzyme catalyses Exonucleolytic cleavage of poly(A) to 5'-AMP.. Positively regulated by the regulatory subunit PAN3. Catalytic subunit of the poly(A)-nuclease (PAN) deadenylation complex, one of two cytoplasmic mRNA deadenylases involved in mRNA turnover. PAN specifically shortens poly(A) tails of RNA and the activity is stimulated by poly(A)-binding protein PAB1. PAN deadenylation is followed by rapid degradation of the shortened mRNA tails by the CCR4-NOT complex. Deadenylated mRNAs are then degraded by two alternative mechanisms, namely exosome-mediated 3'-5' exonucleolytic degradation, or deadenylation-dependent mRNA decaping and subsequent 5'-3' exonucleolytic degradation by XRN1. May also be involved in post-transcriptional maturation of mRNA poly(A) tails. The protein is PAN2-PAN3 deadenylation complex catalytic subunit PAN2 of Lodderomyces elongisporus (strain ATCC 11503 / CBS 2605 / JCM 1781 / NBRC 1676 / NRRL YB-4239) (Yeast).